The primary structure comprises 98 residues: Large ribosomal subunit protein uL23 (98 aa).

Belongs to the universal ribosomal protein uL23 family. As to quaternary structure, part of the 50S ribosomal subunit. Contacts protein L29, and trigger factor when it is bound to the ribosome.

Its function is as follows. One of the early assembly proteins it binds 23S rRNA. One of the proteins that surrounds the polypeptide exit tunnel on the outside of the ribosome. Forms the main docking site for trigger factor binding to the ribosome. This Sorangium cellulosum (strain So ce56) (Polyangium cellulosum (strain So ce56)) protein is Large ribosomal subunit protein uL23.